The sequence spans 411 residues: CinA-like protein (411 aa).

This sequence belongs to the CinA family.

The chain is CinA-like protein from Dictyoglomus thermophilum (strain ATCC 35947 / DSM 3960 / H-6-12).